An 827-amino-acid chain; its full sequence is Beta-galactosidase 1 (827 aa).

Residues 1 to 25 (MMGRRGSSWCRWWVALLVLAVAADA) form the signal peptide. Catalysis depends on E187, which acts as the Proton donor. N198 and N249 each carry an N-linked (GlcNAc...) asparagine glycan. E259 acts as the Nucleophile in catalysis. N260, N366, N392, N502, N520, N578, N586, and N615 each carry an N-linked (GlcNAc...) asparagine glycan. Residues 746–827 (GEAGDAVTLS…SGVLTVQATC (82 aa)) enclose the SUEL-type lectin domain.

The protein belongs to the glycosyl hydrolase 35 family.

The protein localises to the secreted. Its subcellular location is the extracellular space. It localises to the apoplast. The enzyme catalyses Hydrolysis of terminal non-reducing beta-D-galactose residues in beta-D-galactosides.. The protein is Beta-galactosidase 1 of Oryza sativa subsp. japonica (Rice).